Here is a 366-residue protein sequence, read N- to C-terminus: Structure-specific endonuclease subunit SLX1 (366 aa).

Residues 14–95 (AFYCCYLLRS…QNTHATRHID (82 aa)) form the GIY-YIG domain. 2 disordered regions span residues 31–59 (IGST…SMQG) and 102–124 (RAEE…KRPP). Positions 109-123 (GKKKATSPGRRRKRP) are enriched in basic residues. The SLX1-type zinc finger occupies 234–289 (CGVCKNPADMSSSLILVCPIEACQTVSHLSCLSNKFLTEGGELETLVPLEGTCPGC). Residues 317 to 366 (KPKRKRKSDNPAESDAADGQALEQEDEELDETWMEDMSQDEEPSPVKKSR) form a disordered region. Over residues 339–359 (EQEDEELDETWMEDMSQDEEP) the composition is skewed to acidic residues.

It belongs to the SLX1 family. In terms of assembly, forms a heterodimer with SLX4. It depends on a divalent metal cation as a cofactor.

Its subcellular location is the nucleus. Catalytic subunit of the SLX1-SLX4 structure-specific endonuclease that resolves DNA secondary structures generated during DNA repair and recombination. Has endonuclease activity towards branched DNA substrates, introducing single-strand cuts in duplex DNA close to junctions with ss-DNA. The protein is Structure-specific endonuclease subunit SLX1 of Phaeosphaeria nodorum (strain SN15 / ATCC MYA-4574 / FGSC 10173) (Glume blotch fungus).